Reading from the N-terminus, the 99-residue chain is NADH-quinone oxidoreductase subunit K (99 aa).

Transmembrane regions (helical) follow at residues 2–22, 28–48, and 60–80; these read PVEY…LGVL, LILM…FLAF, and IAFF…AVVI.

The protein belongs to the complex I subunit 4L family. As to quaternary structure, NDH-1 is composed of 14 different subunits. Subunits NuoA, H, J, K, L, M, N constitute the membrane sector of the complex.

It is found in the cell inner membrane. It catalyses the reaction a quinone + NADH + 5 H(+)(in) = a quinol + NAD(+) + 4 H(+)(out). In terms of biological role, NDH-1 shuttles electrons from NADH, via FMN and iron-sulfur (Fe-S) centers, to quinones in the respiratory chain. The immediate electron acceptor for the enzyme in this species is believed to be ubiquinone. Couples the redox reaction to proton translocation (for every two electrons transferred, four hydrogen ions are translocated across the cytoplasmic membrane), and thus conserves the redox energy in a proton gradient. This is NADH-quinone oxidoreductase subunit K from Anaeromyxobacter dehalogenans (strain 2CP-1 / ATCC BAA-258).